The chain runs to 77 residues: Acyl carrier protein (77 aa).

Residues 2 to 77 (SSIEERVNKI…SAVDYIKAHS (76 aa)) enclose the Carrier domain. Ser-37 is modified (O-(pantetheine 4'-phosphoryl)serine).

Belongs to the acyl carrier protein (ACP) family. 4'-phosphopantetheine is transferred from CoA to a specific serine of apo-ACP by AcpS. This modification is essential for activity because fatty acids are bound in thioester linkage to the sulfhydryl of the prosthetic group.

The protein resides in the cytoplasm. Its pathway is lipid metabolism; fatty acid biosynthesis. Functionally, carrier of the growing fatty acid chain in fatty acid biosynthesis. The sequence is that of Acyl carrier protein from Alcanivorax borkumensis (strain ATCC 700651 / DSM 11573 / NCIMB 13689 / SK2).